The chain runs to 188 residues: dITP/XTP pyrophosphatase (188 aa).

7–12 (TGNIGK) lines the substrate pocket. Mg(2+) contacts are provided by Glu36 and Asp65. The active-site Proton acceptor is Asp65. Residues Ser66, 141–144 (FGYD), Lys164, and 169–170 (HR) each bind substrate.

The protein belongs to the HAM1 NTPase family. As to quaternary structure, homodimer. It depends on Mg(2+) as a cofactor.

It catalyses the reaction XTP + H2O = XMP + diphosphate + H(+). It carries out the reaction dITP + H2O = dIMP + diphosphate + H(+). The catalysed reaction is ITP + H2O = IMP + diphosphate + H(+). Its function is as follows. Pyrophosphatase that catalyzes the hydrolysis of nucleoside triphosphates to their monophosphate derivatives, with a high preference for the non-canonical purine nucleotides XTP (xanthosine triphosphate), dITP (deoxyinosine triphosphate) and ITP. Seems to function as a house-cleaning enzyme that removes non-canonical purine nucleotides from the nucleotide pool, thus preventing their incorporation into DNA/RNA and avoiding chromosomal lesions. The chain is dITP/XTP pyrophosphatase from Methanopyrus kandleri (strain AV19 / DSM 6324 / JCM 9639 / NBRC 100938).